We begin with the raw amino-acid sequence, 275 residues long: Large ribosomal subunit protein uL2 (275 aa).

Residues 223 to 275 form a disordered region; it reads AAMNANDHPHGGGEAKAGQGNPHPVTPWGVPTKGYKTRKNKRTQQFIVRDRRG.

The protein belongs to the universal ribosomal protein uL2 family. As to quaternary structure, part of the 50S ribosomal subunit. Forms a bridge to the 30S subunit in the 70S ribosome.

One of the primary rRNA binding proteins. Required for association of the 30S and 50S subunits to form the 70S ribosome, for tRNA binding and peptide bond formation. It has been suggested to have peptidyltransferase activity; this is somewhat controversial. Makes several contacts with the 16S rRNA in the 70S ribosome. The sequence is that of Large ribosomal subunit protein uL2 from Xanthomonas campestris pv. campestris (strain 8004).